A 736-amino-acid chain; its full sequence is Catalase-peroxidase (736 aa).

Residues 1-21 (MSNEQKCPFSGTHGARTTVGT) are disordered. The tryptophyl-tyrosyl-methioninium (Trp-Tyr) (with M-250) cross-link spans 96–224 (WHSAGTYRTG…LAAVQMGLIY (129 aa)). Catalysis depends on H97, which acts as the Proton acceptor. A cross-link (tryptophyl-tyrosyl-methioninium (Tyr-Met) (with W-96)) is located at residues 224 to 250 (YVNPEGPDGNPDPVASGRDIRETFARM). Residue H265 coordinates heme b.

The protein belongs to the peroxidase family. Peroxidase/catalase subfamily. As to quaternary structure, homodimer or homotetramer. Requires heme b as cofactor. Post-translationally, formation of the three residue Trp-Tyr-Met cross-link is important for the catalase, but not the peroxidase activity of the enzyme.

It catalyses the reaction H2O2 + AH2 = A + 2 H2O. It carries out the reaction 2 H2O2 = O2 + 2 H2O. In terms of biological role, bifunctional enzyme with both catalase and broad-spectrum peroxidase activity. The sequence is that of Catalase-peroxidase from Dechloromonas aromatica (strain RCB).